Here is a 345-residue protein sequence, read N- to C-terminus: NADPH dehydrogenase (345 aa).

Position 23 to 26 (23 to 26) interacts with FMN; it reads SPMC. Tyrosine 28 contributes to the substrate binding site. Residues alanine 60 and glutamine 102 each coordinate FMN. A substrate-binding site is contributed by 164–167; sequence HGAH. FMN-binding positions include arginine 215 and 307–308; that span reads GR.

This sequence belongs to the NADH:flavin oxidoreductase/NADH oxidase family. NamA subfamily. Homotetramer. FMN is required as a cofactor.

The enzyme catalyses A + NADPH + H(+) = AH2 + NADP(+). Catalyzes the reduction of the double bond of an array of alpha,beta-unsaturated aldehydes and ketones. It also reduces the nitro group of nitroester and nitroaromatic compounds. It could have a role in detoxification processes. This is NADPH dehydrogenase from Bacillus cereus (strain B4264).